Here is a 98-residue protein sequence, read N- to C-terminus: uncharacterized protein (98 aa).

Positions 58-98 are disordered; the sequence is ARFPVEDTAGGLLRTGGHRPQISDEEVSKRHHEQSHGQEDH.

This is an uncharacterized protein from Saccharomyces cerevisiae (strain ATCC 204508 / S288c) (Baker's yeast).